A 422-amino-acid chain; its full sequence is Dihydroorotase (422 aa).

The Zn(2+) site is built by histidine 59 and histidine 61. Substrate contacts are provided by residues 61–63 (HFR) and asparagine 93. Positions 150, 177, and 230 each coordinate Zn(2+). Residue asparagine 276 participates in substrate binding. Aspartate 303 lines the Zn(2+) pocket. The active site involves aspartate 303. Histidine 307 lines the substrate pocket.

It belongs to the metallo-dependent hydrolases superfamily. DHOase family. Class I DHOase subfamily. Zn(2+) serves as cofactor.

The catalysed reaction is (S)-dihydroorotate + H2O = N-carbamoyl-L-aspartate + H(+). The protein operates within pyrimidine metabolism; UMP biosynthesis via de novo pathway; (S)-dihydroorotate from bicarbonate: step 3/3. Functionally, catalyzes the reversible cyclization of carbamoyl aspartate to dihydroorotate. This Streptococcus pneumoniae serotype 4 (strain ATCC BAA-334 / TIGR4) protein is Dihydroorotase.